Here is a 559-residue protein sequence, read N- to C-terminus: NAD-dependent histone deacetylase SIR2 (559 aa).

Residues M1–G73 form a disordered region. Residues N39–D51 are compositionally biased toward basic and acidic residues. The segment covering E52–E62 has biased composition (acidic residues). In terms of domain architecture, Deacetylase sirtuin-type spans R223–D514. NAD(+)-binding positions include G248–Y267 and Q330–D333. The active-site Proton acceptor is the H350. Positions 358, 361, 382, and 385 each coordinate Zn(2+). Residues G458–S460, N483–D485, and C500 contribute to the NAD(+) site.

The protein belongs to the sirtuin family. Class I subfamily. Requires Zn(2+) as cofactor.

It localises to the nucleus. The enzyme catalyses N(6)-acetyl-L-lysyl-[protein] + NAD(+) + H2O = 2''-O-acetyl-ADP-D-ribose + nicotinamide + L-lysyl-[protein]. In terms of biological role, NAD-dependent deacetylase. Heterochromatin component that silences transcription at silent mating loci, telomeres and the ribosomal DNA, and that also suppresses recombination in the rDNA and extends replicative life span. It acts as a NAD-dependent histone deacetylase, which deacetylates 'Lys-9' and 'Lys-14' of Histone H3 and 'Lys-16' of Histone H4. In Eremothecium gossypii (strain ATCC 10895 / CBS 109.51 / FGSC 9923 / NRRL Y-1056) (Yeast), this protein is NAD-dependent histone deacetylase SIR2 (SIR2).